We begin with the raw amino-acid sequence, 1116 residues long: DUB-associated factor 1 (1116 aa).

WD repeat units follow at residues 21-62, 91-132, 160-200, 219-262, 266-305, 387-426, and 428-466; these read AHIL…NEPE, KNSD…DHDD, VHDG…EKMA, SMSP…EVIR, AHRT…DQTT, KKYG…FSVN, and GGFA…LLNT. The disordered stretch occupies residues 578-600; it reads LDTGYNSESKKNNKDKKRKSTFK. Residue Ser-668 is modified to Phosphoserine. Residue Thr-693 is modified to Phosphothreonine. Positions 747–776 are enriched in polar residues; sequence ISSQDLPSNNTHNKLRSSENSRANSTSTLE. Disordered stretches follow at residues 747 to 784 and 963 to 994; these read ISSQ…KKPE and FISA…PSTQ. Residues 967 to 987 are compositionally biased toward low complexity; it reads SDTTESSGNDSSDSSLGNGNE.

As to quaternary structure, interacts (via its WD repeats) with ubiquitin.

It localises to the cytoplasm. Ubiquitin-binding protein involved in the resistance to phenanthroline, sanguinarine, nordihydroguaiaretic acid (NDGA), isopropyl (N-3-chloro-phenyl)-carbamate (IPCPC) and guanosine 5'-O-(2-thiodiphosphate). The sequence is that of DUB-associated factor 1 from Saccharomyces cerevisiae (strain ATCC 204508 / S288c) (Baker's yeast).